The following is a 317-amino-acid chain: Beta-ketoacyl-[acyl-carrier-protein] synthase III (317 aa).

Catalysis depends on residues Cys112 and His244. Residues 245-249 are ACP-binding; it reads QANLR. Asn274 is an active-site residue.

The protein belongs to the thiolase-like superfamily. FabH family. In terms of assembly, homodimer.

Its subcellular location is the cytoplasm. The catalysed reaction is malonyl-[ACP] + acetyl-CoA + H(+) = 3-oxobutanoyl-[ACP] + CO2 + CoA. It functions in the pathway lipid metabolism; fatty acid biosynthesis. In terms of biological role, catalyzes the condensation reaction of fatty acid synthesis by the addition to an acyl acceptor of two carbons from malonyl-ACP. Catalyzes the first condensation reaction which initiates fatty acid synthesis and may therefore play a role in governing the total rate of fatty acid production. Possesses both acetoacetyl-ACP synthase and acetyl transacylase activities. Its substrate specificity determines the biosynthesis of branched-chain and/or straight-chain of fatty acids. The protein is Beta-ketoacyl-[acyl-carrier-protein] synthase III of Serratia proteamaculans (strain 568).